Consider the following 296-residue polypeptide: Acetylglutamate kinase (296 aa).

Residues 69 to 70 (GG), Arg-91, and Asn-192 contribute to the substrate site.

Belongs to the acetylglutamate kinase family. ArgB subfamily.

The protein localises to the cytoplasm. The catalysed reaction is N-acetyl-L-glutamate + ATP = N-acetyl-L-glutamyl 5-phosphate + ADP. It participates in amino-acid biosynthesis; L-arginine biosynthesis; N(2)-acetyl-L-ornithine from L-glutamate: step 2/4. Functionally, catalyzes the ATP-dependent phosphorylation of N-acetyl-L-glutamate. The protein is Acetylglutamate kinase of Ruthia magnifica subsp. Calyptogena magnifica.